The primary structure comprises 85 residues: Large ribosomal subunit protein bL31B (85 aa).

It belongs to the bacterial ribosomal protein bL31 family. Type B subfamily. As to quaternary structure, part of the 50S ribosomal subunit.

The protein is Large ribosomal subunit protein bL31B of Serratia proteamaculans (strain 568).